The chain runs to 136 residues: Small ribosomal subunit protein uS9 (136 aa).

Residues L96–R136 are disordered. Positions P98–A116 are enriched in basic and acidic residues. Positions K117 to R136 are enriched in basic residues.

The protein belongs to the universal ribosomal protein uS9 family.

The sequence is that of Small ribosomal subunit protein uS9 from Prochlorococcus marinus (strain MIT 9515).